We begin with the raw amino-acid sequence, 251 residues long: Aspartate/glutamate leucyltransferase (251 aa).

It belongs to the R-transferase family. Bpt subfamily.

The protein localises to the cytoplasm. It carries out the reaction N-terminal L-glutamyl-[protein] + L-leucyl-tRNA(Leu) = N-terminal L-leucyl-L-glutamyl-[protein] + tRNA(Leu) + H(+). The enzyme catalyses N-terminal L-aspartyl-[protein] + L-leucyl-tRNA(Leu) = N-terminal L-leucyl-L-aspartyl-[protein] + tRNA(Leu) + H(+). Functionally, functions in the N-end rule pathway of protein degradation where it conjugates Leu from its aminoacyl-tRNA to the N-termini of proteins containing an N-terminal aspartate or glutamate. The protein is Aspartate/glutamate leucyltransferase of Xanthomonas oryzae pv. oryzae (strain MAFF 311018).